Reading from the N-terminus, the 197-residue chain is Large ribosomal subunit protein bL9c (197 aa).

The N-terminal 42 residues, 1–42 (MASSTALSLSWSSSPCWSHSFNGGANETLKVSERRFNFEVVS), are a transit peptide targeting the chloroplast.

Belongs to the bacterial ribosomal protein bL9 family. In terms of assembly, part of the 50S ribosomal subunit.

The protein localises to the plastid. It localises to the chloroplast. In terms of biological role, binds to the 23S rRNA. In Arabidopsis thaliana (Mouse-ear cress), this protein is Large ribosomal subunit protein bL9c (RPL9).